We begin with the raw amino-acid sequence, 339 residues long: Inositol 2-dehydrogenase 2 (339 aa).

It belongs to the Gfo/Idh/MocA family. In terms of assembly, homotetramer.

The catalysed reaction is myo-inositol + NAD(+) = scyllo-inosose + NADH + H(+). Functionally, involved in the oxidation of myo-inositol (MI) to 2-keto-myo-inositol (2KMI or 2-inosose). The protein is Inositol 2-dehydrogenase 2 of Saccharopolyspora erythraea (strain ATCC 11635 / DSM 40517 / JCM 4748 / NBRC 13426 / NCIMB 8594 / NRRL 2338).